A 204-amino-acid chain; its full sequence is Cytochrome P450 monooxygenase PC-23 (204 aa).

Cys-138 provides a ligand contact to heme.

Belongs to the cytochrome P450 family. It depends on heme as a cofactor.

It participates in secondary metabolite biosynthesis. Functionally, cytochrome P450 monooxygenase; part of the gene cluster that mediates the biosynthesis of the indole diterpenes penitrems. The geranylgeranyl diphosphate (GGPP) synthase penG catalyzes the first step in penitrem biosynthesis via conversion of farnesyl pyrophosphate and isopentyl pyrophosphate into geranylgeranyl pyrophosphate (GGPP). Condensation of indole-3-glycerol phosphate with GGPP by the prenyl transferase penC then forms 3-geranylgeranylindole (3-GGI). Epoxidation by the FAD-dependent monooxygenase penM leads to a epoxidized-GGI that is substrate of the terpene cyclase penB for cyclization to yield paspaline. Paspaline is subsequently converted to 13-desoxypaxilline by the cytochrome P450 monooxygenase penP, the latter being then converted to paxilline by the cytochrome P450 monooxygenase penQ. Paxilline is converted to beta-paxitriol via C-10 ketoreduction by the short-chain dehydrogenase PC-15 which can be monoprenylated at the C-20 by the indole diterpene prenyltransferase penD. A two-step elimination (acetylation and elimination) process performed by the O-acetyltransferase PC-16 and the P.simplicissimum ptmI-ortholog not yet identified in P.crustosum, leads to the production of the prenylated form of penijanthine. The FAD-linked oxidoreductase ptmO then converts the prenylated form of penijanthine into PC-M5 which is in turn transformed into PC-M4 by the aromatic dimethylallyltransferase PC-22. A series of oxidation steps involving 4 cytochrome P450 monooxygenases (PC-21, PC-05, PC-23, PC-20) and a FAD-dependent monooxygenase (PC-14) are required for the transformation of PC-M4 to penitrems A and E. Synthesis of these final products is proposed to proceed via penitrems D and C (PC-21, PC-05, PC-14) and penitrems B and F (PC-21, PC-05, PC-14, PC-23). In Penicillium crustosum (Blue mold fungus), this protein is Cytochrome P450 monooxygenase PC-23.